The sequence spans 95 residues: Large ribosomal subunit protein uL22c (95 aa).

The protein belongs to the universal ribosomal protein uL22 family. In terms of assembly, part of the 50S ribosomal subunit.

The protein localises to the plastid. It localises to the chloroplast. This protein binds specifically to 23S rRNA. In terms of biological role, the globular domain of the protein is located near the polypeptide exit tunnel on the outside of the subunit, while an extended beta-hairpin is found that lines the wall of the exit tunnel in the center of the 70S ribosome. This Cyanidioschyzon merolae (strain NIES-3377 / 10D) (Unicellular red alga) protein is Large ribosomal subunit protein uL22c (rpl22).